The following is a 154-amino-acid chain: Major allergen Dau c 1 (154 aa).

It belongs to the BetVI family. Homodimer.

This chain is Major allergen Dau c 1, found in Daucus carota (Wild carrot).